The chain runs to 79 residues: Exodeoxyribonuclease 7 small subunit (79 aa).

The protein belongs to the XseB family. In terms of assembly, heterooligomer composed of large and small subunits.

It localises to the cytoplasm. The enzyme catalyses Exonucleolytic cleavage in either 5'- to 3'- or 3'- to 5'-direction to yield nucleoside 5'-phosphates.. Functionally, bidirectionally degrades single-stranded DNA into large acid-insoluble oligonucleotides, which are then degraded further into small acid-soluble oligonucleotides. The polypeptide is Exodeoxyribonuclease 7 small subunit (Geobacillus kaustophilus (strain HTA426)).